Reading from the N-terminus, the 208-residue chain is 2-phospho-L-lactate guanylyltransferase (208 aa).

This sequence belongs to the CofC family. Homodimer.

The catalysed reaction is (2S)-2-phospholactate + GTP + H(+) = (2S)-lactyl-2-diphospho-5'-guanosine + diphosphate. The protein operates within cofactor biosynthesis; coenzyme F420 biosynthesis. Functionally, guanylyltransferase that catalyzes the activation of (2S)-2-phospholactate (2-PL) as (2S)-lactyl-2-diphospho-5'-guanosine, via the condensation of 2-PL with GTP. It is involved in the biosynthesis of coenzyme F420, a hydride carrier cofactor. The polypeptide is 2-phospho-L-lactate guanylyltransferase (Haloarcula marismortui (strain ATCC 43049 / DSM 3752 / JCM 8966 / VKM B-1809) (Halobacterium marismortui)).